A 193-amino-acid polypeptide reads, in one-letter code: uncharacterized protein (193 aa).

Positions 1–144 are disordered; sequence MEKKRTLSVN…NNNNNNEGTI (144 aa). Residues 29–86 show a composition bias toward low complexity; it reads NSLNNIENNECNNNNNNNNNNNNNNSNSNNLNNSNNNNINTSSNSINSSNSINNSIDN. Over residues 103–118 the composition is skewed to polar residues; sequence KMNSSQEFQSYLTPNK. The span at 119–140 shows a compositional bias: low complexity; sequence NNNNRNNNNRNNNNNNNNNNNN. A helical transmembrane segment spans residues 158 to 180; that stretch reads YMIRPFLVGASASFGISIGMFYF.

It localises to the membrane. This is an uncharacterized protein from Dictyostelium discoideum (Social amoeba).